Here is a 132-residue protein sequence, read N- to C-terminus: Small ribosomal subunit protein uS8c (132 aa).

It belongs to the universal ribosomal protein uS8 family. In terms of assembly, part of the 30S ribosomal subunit.

The protein localises to the plastid. Its subcellular location is the chloroplast. In terms of biological role, one of the primary rRNA binding proteins, it binds directly to 16S rRNA central domain where it helps coordinate assembly of the platform of the 30S subunit. In Pinus thunbergii (Japanese black pine), this protein is Small ribosomal subunit protein uS8c (rps8).